Here is a 95-residue protein sequence, read N- to C-terminus: uncharacterized protein (95 aa).

A helical transmembrane segment spans residues 12 to 32 (LASLIVSMVVLVVGLALWFFV). A disordered region spans residues 66–87 (ANEPEKEAEPATAASEPKEDED).

It is found in the cell membrane. This is an uncharacterized protein from Salmonella typhi.